A 128-amino-acid chain; its full sequence is EPIDERMAL PATTERNING FACTOR-like protein 2 (128 aa).

The N-terminal stretch at 1–28 (MVWSSNMSSFLLILLILNSTHFSLMANG) is a signal peptide. 3 disulfides stabilise this stretch: Cys-60-Cys-119, Cys-65-Cys-71, and Cys-68-Cys-121. Residues 79 to 90 (NPQTKLHSPLTT) are compositionally biased toward polar residues. The interval 79 to 100 (NPQTKLHSPLTTSSSSSSETIH) is disordered.

It belongs to the plant cysteine rich small secretory peptide family. Epidermal patterning factor subfamily.

It localises to the secreted. Functionally, controls stomatal patterning. The protein is EPIDERMAL PATTERNING FACTOR-like protein 2 of Arabidopsis thaliana (Mouse-ear cress).